A 214-amino-acid polypeptide reads, in one-letter code: Probable GTP-binding protein EngB (214 aa).

The region spanning 40–212 is the EngB-type G domain; that stretch reads SLPEIVFVGK…KASFAQCIKH (173 aa). GTP-binding positions include 48 to 55, 75 to 79, 93 to 96, 160 to 163, and 191 to 193; these read GKSNVGKS, GRTRQ, DLPG, TKSD, and VSS. The Mg(2+) site is built by serine 55 and threonine 77.

The protein belongs to the TRAFAC class TrmE-Era-EngA-EngB-Septin-like GTPase superfamily. EngB GTPase family. It depends on Mg(2+) as a cofactor.

In terms of biological role, necessary for normal cell division and for the maintenance of normal septation. The polypeptide is Probable GTP-binding protein EngB (Rickettsia prowazekii (strain Madrid E)).